The chain runs to 118 residues: Small ribosomal subunit protein uS13 (118 aa).

The interval 94 to 118 is disordered; the sequence is GLPVRGQRTKTNARTRKGPRKPIKK.

It belongs to the universal ribosomal protein uS13 family. Part of the 30S ribosomal subunit. Forms a loose heterodimer with protein S19. Forms two bridges to the 50S subunit in the 70S ribosome.

Functionally, located at the top of the head of the 30S subunit, it contacts several helices of the 16S rRNA. In the 70S ribosome it contacts the 23S rRNA (bridge B1a) and protein L5 of the 50S subunit (bridge B1b), connecting the 2 subunits; these bridges are implicated in subunit movement. Contacts the tRNAs in the A and P-sites. The polypeptide is Small ribosomal subunit protein uS13 (Salmonella paratyphi A (strain ATCC 9150 / SARB42)).